Here is a 614-residue protein sequence, read N- to C-terminus: Fructokinase-like 2, chloroplastic (614 aa).

Residues 1–44 (MASLSFTQFLSFPRCNADVPCLLQSHGFVKFRGERWNGKQSFSM) constitute a chloroplast transit peptide. 2 disordered regions span residues 47-75 (GRRK…KPSK) and 542-592 (GYPP…YVMK). The segment covering 548 to 563 (DMEEEEDDEEEDEVES) has biased composition (acidic residues). The segment covering 571-583 (ITEKEYRTSKPYD) has biased composition (basic and acidic residues).

The protein belongs to the carbohydrate kinase PfkB family. As to quaternary structure, interacts with CITRX/TRXz. Binds to FLN1 and PTAC5. Associates with the plastid-encoded RNA polymerase (PEP) complex.

Its subcellular location is the plastid. It is found in the chloroplast. In terms of biological role, required for proper chloroplast development, most likely through regulating plastid-encoded polymerase (PEP) dependent chloroplast transcription. Acts as a component of the transcriptionally active plastid chromosome that is required for plastid gene expression. The sequence is that of Fructokinase-like 2, chloroplastic from Arabidopsis thaliana (Mouse-ear cress).